We begin with the raw amino-acid sequence, 1688 residues long: Voltage-dependent L-type calcium channel subunit alpha-1S (1688 aa).

Residues M1–P24 are disordered. Topologically, residues M1–K51 are cytoplasmic. The I repeat unit spans residues N38 to F335. The chain crosses the membrane as a helical span at residues P52–I70. Over F71–K88 the chain is Extracellular. N80 carries an N-linked (GlcNAc...) asparagine glycan. A helical transmembrane segment spans residues V89–Y108. Topologically, residues G109 to N120 are cytoplasmic. The chain crosses the membrane as a helical span at residues G121–L139. Residues E140–N158 lie on the Extracellular side of the membrane. The helical transmembrane segment at V159–V177 threads the bilayer. Residues P178–H196 lie on the Cytoplasmic side of the membrane. A helical transmembrane segment spans residues I197–F216. At S217–W307 the chain is on the extracellular side. N255 is a glycosylation site (N-linked (GlcNAc...) asparagine). Position 290 (E290) interacts with Ca(2+). The chain crosses the membrane as a helical span at residues P308–S332. Residues G333–R431 are Cytoplasmic-facing. Positions Q355 to E372 are binding to the beta subunit. Residues H417–L663 form an II repeat. Residues F432–T450 form a helical membrane-spanning segment. Over E451–I465 the chain is Extracellular. The chain crosses the membrane as a helical span at residues A466–L485. The Cytoplasmic portion of the chain corresponds to G486–S493. A helical membrane pass occupies residues L494–L512. The Extracellular segment spans residues V513 to G522. Residues I523–W541 form a helical membrane-spanning segment. The Cytoplasmic segment spans residues T542–S560. Residues L561–F580 traverse the membrane as a helical segment. Residues G581–S635 lie on the Extracellular side of the membrane. Position 613 (E613) interacts with Ca(2+). The chain crosses the membrane as a helical span at residues V636–V660. The Cytoplasmic portion of the chain corresponds to D661–T797. Disordered stretches follow at residues A672–E696 and E729–R755. The segment covering P740–E749 has biased composition (acidic residues). An III repeat occupies N784–F1066. Residues T798–A816 form a helical membrane-spanning segment. Over E817 to K832 the chain is Extracellular. Residues L833–Y852 form a helical membrane-spanning segment. The Cytoplasmic segment spans residues G853–N864. Residues S865–I883 traverse the membrane as a helical segment. Residues E884–V890 lie on the Extracellular side of the membrane. A helical transmembrane segment spans residues V891 to A909. Topologically, residues K910–N928 are cytoplasmic. A helical membrane pass occupies residues I929–F948. Residues K949–E1038 are Extracellular-facing. The interval R986–K1075 is dihydropyridine binding. Residue E1012 participates in Ca(2+) binding. A helical membrane pass occupies residues I1039–I1063. Residues V1064–S1116 are Cytoplasmic-facing. One copy of the IV repeat lies at N1103–F1371. Residues Y1117 to M1135 traverse the membrane as a helical segment. Topologically, residues Q1136 to I1150 are extracellular. Residues L1151–F1170 form a helical membrane-spanning segment. The Cytoplasmic portion of the chain corresponds to K1171–D1178. Residues P1179–L1197 traverse the membrane as a helical segment. Residues S1198–S1218 lie on the Extracellular side of the membrane. The chain crosses the membrane as a helical span at residues I1219–G1237. Over E1238–Y1256 the chain is Cytoplasmic. Residues V1257–F1276 form a helical membrane-spanning segment. Over G1277–F1343 the chain is Extracellular. Residues L1324–K1390 are dihydropyridine binding. The segment at E1336 to S1379 is phenylalkylamine binding. Residues A1344–M1368 form a helical membrane-spanning segment. The Cytoplasmic portion of the chain corresponds to D1369–N1688. Disordered regions lie at residues P1635–T1664 and R1669–N1688. The span at D1678–N1688 shows a compositional bias: polar residues.

It belongs to the calcium channel alpha-1 subunit (TC 1.A.1.11) family. As to quaternary structure, multisubunit complex consisting of alpha-1, alpha-2, beta and delta subunits in a 1:1:1:1 ratio. The channel activity is directed by the pore-forming and voltage-sensitive alpha-1 subunit. In many cases, this subunit is sufficient to generate voltage-sensitive calcium channel activity. The auxiliary subunits beta and alpha-2/delta linked by a disulfide bridge regulate the channel activity. An additional gamma subunit is present only in skeletal muscle L-type channel. Post-translationally, phosphorylation by PKA stimulates the calcium channel function. As to expression, skeletal muscle specific.

It is found in the membrane. Functionally, voltage-sensitive calcium channels (VSCC) mediate the entry of calcium ions into excitable cells and are also involved in a variety of calcium-dependent processes, including muscle contraction, gene expression, cell motility, cell division and cell death. The isoform alpha-1S gives rise to L-type calcium currents. Long-lasting (L-type) calcium channels belong to the 'high-voltage activated' (HVA) group. They are blocked by dihydropyridines (DHP), phenylalkylamines, and by benzothiazepines. Calcium channels containing the alpha-1S subunit play an important role in excitation-contraction coupling in skele|tal muscle. The chain is Voltage-dependent L-type calcium channel subunit alpha-1S from Aquarana catesbeiana (American bullfrog).